We begin with the raw amino-acid sequence, 174 residues long: Urease accessory protein UreE (174 aa).

Positions 146 to 174 (NGAYATGGHAHDHDGEPEHVHGPGCQHAH) are disordered. Over residues 154–166 (HAHDHDGEPEHVH) the composition is skewed to basic and acidic residues.

Belongs to the UreE family.

The protein localises to the cytoplasm. Involved in urease metallocenter assembly. Binds nickel. Probably functions as a nickel donor during metallocenter assembly. The polypeptide is Urease accessory protein UreE (Albidiferax ferrireducens (strain ATCC BAA-621 / DSM 15236 / T118) (Rhodoferax ferrireducens)).